The sequence spans 388 residues: Cystathionine gamma-synthase (388 aa).

Residue Lys-208 is modified to N6-(pyridoxal phosphate)lysine.

This sequence belongs to the trans-sulfuration enzymes family. As to quaternary structure, homotetramer. The cofactor is pyridoxal 5'-phosphate.

Its subcellular location is the cytoplasm. The enzyme catalyses O-succinyl-L-homoserine + L-cysteine = L,L-cystathionine + succinate + H(+). Functionally, catalyzes the formation of L-cystathionine from O-succinyl-L-homoserine (OSHS) and L-cysteine, via a gamma-replacement reaction. In the absence of thiol, catalyzes gamma-elimination to form 2-oxobutanoate, succinate and ammonia. In Mycobacterium leprae (strain TN), this protein is Cystathionine gamma-synthase (metB).